Here is an 89-residue protein sequence, read N- to C-terminus: SAP domain-containing new25 (89 aa).

The region spanning 44 to 78 (PSQWSKKQLIEYCKKNSLKTSGSHEELVIRVQNHL) is the SAP domain.

The polypeptide is SAP domain-containing new25 (new25) (Schizosaccharomyces pombe (strain 972 / ATCC 24843) (Fission yeast)).